A 628-amino-acid polypeptide reads, in one-letter code: 1-deoxy-D-xylulose-5-phosphate synthase (628 aa).

Residues His-72 and 113-115 contribute to the thiamine diphosphate site; that span reads GHS. Asp-144 is a binding site for Mg(2+). Thiamine diphosphate-binding positions include 145-146, Asn-173, Tyr-284, and Glu-367; that span reads GA. A Mg(2+)-binding site is contributed by Asn-173.

Belongs to the transketolase family. DXPS subfamily. As to quaternary structure, homodimer. Mg(2+) is required as a cofactor. Thiamine diphosphate serves as cofactor.

The enzyme catalyses D-glyceraldehyde 3-phosphate + pyruvate + H(+) = 1-deoxy-D-xylulose 5-phosphate + CO2. It participates in metabolic intermediate biosynthesis; 1-deoxy-D-xylulose 5-phosphate biosynthesis; 1-deoxy-D-xylulose 5-phosphate from D-glyceraldehyde 3-phosphate and pyruvate: step 1/1. Catalyzes the acyloin condensation reaction between C atoms 2 and 3 of pyruvate and glyceraldehyde 3-phosphate to yield 1-deoxy-D-xylulose-5-phosphate (DXP). In Exiguobacterium sibiricum (strain DSM 17290 / CCUG 55495 / CIP 109462 / JCM 13490 / 255-15), this protein is 1-deoxy-D-xylulose-5-phosphate synthase.